Here is an 80-residue protein sequence, read N- to C-terminus: Exodeoxyribonuclease 7 small subunit (80 aa).

The protein belongs to the XseB family. In terms of assembly, heterooligomer composed of large and small subunits.

It localises to the cytoplasm. It catalyses the reaction Exonucleolytic cleavage in either 5'- to 3'- or 3'- to 5'-direction to yield nucleoside 5'-phosphates.. Bidirectionally degrades single-stranded DNA into large acid-insoluble oligonucleotides, which are then degraded further into small acid-soluble oligonucleotides. This is Exodeoxyribonuclease 7 small subunit from Rickettsia felis (strain ATCC VR-1525 / URRWXCal2) (Rickettsia azadi).